An 83-amino-acid chain; its full sequence is MKTLLLTLVVVTIVCLDFGHTLICYNYETPLDKTTECCGNGVTTCFAKSWRDHRGLRTDRGCGCPNVKPGVTINCCKTDRCNG.

An N-terminal signal peptide occupies residues 1–21 (MKTLLLTLVVVTIVCLDFGHT). 4 disulfide bridges follow: Cys-24/Cys-45, Cys-38/Cys-62, Cys-64/Cys-75, and Cys-76/Cys-81.

Belongs to the three-finger toxin family. Short-chain subfamily. Type I alpha-neurotoxin sub-subfamily. Dimer. In terms of tissue distribution, expressed by the venom gland.

It is found in the secreted. Its function is as follows. Binds to muscle nicotinic acetylcholine receptor (nAChR) and inhibit acetylcholine from binding to the receptor, thereby impairing neuromuscular transmission. The polypeptide is Three-finger toxin MALT0066C (Micrurus altirostris (Uruguayan coral snake)).